Consider the following 101-residue polypeptide: Chaperone modulatory protein CbpM (101 aa).

It belongs to the CbpM family.

Functionally, interacts with CbpA and inhibits both the DnaJ-like co-chaperone activity and the DNA binding activity of CbpA. Together with CbpA, modulates the activity of the DnaK chaperone system. Does not inhibit the co-chaperone activity of DnaJ. In Citrobacter koseri (strain ATCC BAA-895 / CDC 4225-83 / SGSC4696), this protein is Chaperone modulatory protein CbpM.